Reading from the N-terminus, the 179-residue chain is Large ribosomal subunit protein uL5 (179 aa).

This sequence belongs to the universal ribosomal protein uL5 family. Part of the 50S ribosomal subunit; part of the 5S rRNA/L5/L18/L25 subcomplex. Contacts the 5S rRNA and the P site tRNA. Forms a bridge to the 30S subunit in the 70S ribosome.

This is one of the proteins that bind and probably mediate the attachment of the 5S RNA into the large ribosomal subunit, where it forms part of the central protuberance. In the 70S ribosome it contacts protein S13 of the 30S subunit (bridge B1b), connecting the 2 subunits; this bridge is implicated in subunit movement. Contacts the P site tRNA; the 5S rRNA and some of its associated proteins might help stabilize positioning of ribosome-bound tRNAs. The sequence is that of Large ribosomal subunit protein uL5 from Dehalococcoides mccartyi (strain ATCC BAA-2266 / KCTC 15142 / 195) (Dehalococcoides ethenogenes (strain 195)).